A 603-amino-acid chain; its full sequence is Phosphomethylpyrimidine synthase (603 aa).

Residues Asn224, Met253, Tyr282, His318, 338-340 (SRG), 379-382 (DGLR), and Glu418 contribute to the substrate site. His422 contacts Zn(2+). Tyr445 is a substrate binding site. His486 is a binding site for Zn(2+). [4Fe-4S] cluster contacts are provided by Cys566, Cys569, and Cys574.

Belongs to the ThiC family. As to quaternary structure, homodimer. Requires [4Fe-4S] cluster as cofactor.

It catalyses the reaction 5-amino-1-(5-phospho-beta-D-ribosyl)imidazole + S-adenosyl-L-methionine = 4-amino-2-methyl-5-(phosphooxymethyl)pyrimidine + CO + 5'-deoxyadenosine + formate + L-methionine + 3 H(+). Its pathway is cofactor biosynthesis; thiamine diphosphate biosynthesis. Catalyzes the synthesis of the hydroxymethylpyrimidine phosphate (HMP-P) moiety of thiamine from aminoimidazole ribotide (AIR) in a radical S-adenosyl-L-methionine (SAM)-dependent reaction. The chain is Phosphomethylpyrimidine synthase from Xylella fastidiosa (strain Temecula1 / ATCC 700964).